We begin with the raw amino-acid sequence, 1487 residues long: Major viral transcription factor (1487 aa).

3 disordered regions span residues 41–295 (AAPD…LPPG), 310–370 (LAKT…AEEA), and 803–1007 (PPTR…HTPR). Positions 66-75 (VIPPPSPTPE) are enriched in pro residues. Composition is skewed to low complexity over residues 165–193 (PSSA…SSSS) and 201–213 (DGAG…SSSS). A compositionally biased stretch (acidic residues) spans 214 to 224 (DDSDSDEGGEE). A compositionally biased stretch (low complexity) spans 235 to 272 (AAKTPSAAGSPGPSSGGDRPAAGAATPKSCRSGAASPG). The span at 273-285 (APAPAPASAPAPS) shows a compositional bias: pro residues. Low complexity-rich tracts occupy residues 807–829 (SQQP…AEGS), 849–860 (PSSHSQSPQHSQ), and 867–877 (ATTATCCRATQ). Polar residues predominate over residues 878–893 (TNARSRGQQHQPQKAR). Residues 920 to 929 (HGRPRGKSGK) show a composition bias toward basic residues. Positions 938–951 (AAQAGASASFSSSA) are enriched in low complexity. Positions 988 to 1007 (GPDRRGGFRRVPRGDCHTPR) are enriched in basic and acidic residues.

The protein belongs to the herpesviridae ICP4 family. Post-translationally, a long stretch of serine residues may be a major site of phosphorylation.

It is found in the host nucleus. Functionally, this IE protein is a multifunctional protein capable of migrating to the nucleus, binding to DNA, trans-activating other viral genes, and autoregulating its own synthesis. In Equine herpesvirus 1 (strain Ab4p) (EHV-1), this protein is Major viral transcription factor (IE).